Here is a 123-residue protein sequence, read N- to C-terminus: Histone H2B (123 aa).

The disordered stretch occupies residues 1–32; the sequence is MAPKAPGKGAKKAAKSKAPRAPGDRKRKRTRR. Residues 9–18 are compositionally biased toward basic residues; sequence GAKKAAKSKA. Serine 110 carries O-linked (GlcNAc) serine glycosylation. A Glycyl lysine isopeptide (Lys-Gly) (interchain with G-Cter in ubiquitin) cross-link involves residue lysine 118.

Belongs to the histone H2B family. As to quaternary structure, the nucleosome is a histone octamer containing two molecules each of H2A, H2B, H3 and H4 assembled in one H3-H4 heterotetramer and two H2A-H2B heterodimers. The octamer wraps approximately 147 bp of DNA. Monoubiquitination of Lys-118 gives a specific tag for epigenetic transcriptional activation and is also prerequisite for histone H3 'Lys-4' and 'Lys-79' methylation. Post-translationally, glcNAcylation at Ser-110 promotes monoubiquitination of Lys-118. It fluctuates in response to extracellular glucose, and associates with transcribed genes.

It is found in the nucleus. Its subcellular location is the chromosome. Its function is as follows. Core component of nucleosome. Nucleosomes wrap and compact DNA into chromatin, limiting DNA accessibility to the cellular machineries which require DNA as a template. Histones thereby play a central role in transcription regulation, DNA repair, DNA replication and chromosomal stability. DNA accessibility is regulated via a complex set of post-translational modifications of histones, also called histone code, and nucleosome remodeling. The chain is Histone H2B from Holothuria tubulosa (Tubular sea cucumber).